The sequence spans 198 residues: uncharacterized protein (198 aa).

4 helical membrane passes run 20–40 (VIVG…GLWA), 70–90 (FFVA…TASV), 107–127 (LAIG…LLVW), and 164–184 (VAAT…VLAA).

The protein to M.tuberculosis Rv1591.

Its subcellular location is the cell membrane. This is an uncharacterized protein from Mycobacterium leprae (strain TN).